A 65-amino-acid chain; its full sequence is UPF0434 protein Mpe_A2486 (65 aa).

It belongs to the UPF0434 family.

In Methylibium petroleiphilum (strain ATCC BAA-1232 / LMG 22953 / PM1), this protein is UPF0434 protein Mpe_A2486.